We begin with the raw amino-acid sequence, 226 residues long: Octanoyltransferase (226 aa).

Residues 34–212 (LAAPDVLLTL…AFSRVFGLEF (179 aa)) enclose the BPL/LPL catalytic domain. Substrate-binding positions include 76–83 (RGGDVTYH), 143–145 (AIG), and 156–158 (GIA). Cys174 serves as the catalytic Acyl-thioester intermediate.

Belongs to the LipB family.

The protein resides in the cytoplasm. The catalysed reaction is octanoyl-[ACP] + L-lysyl-[protein] = N(6)-octanoyl-L-lysyl-[protein] + holo-[ACP] + H(+). It functions in the pathway protein modification; protein lipoylation via endogenous pathway; protein N(6)-(lipoyl)lysine from octanoyl-[acyl-carrier-protein]: step 1/2. In terms of biological role, catalyzes the transfer of endogenously produced octanoic acid from octanoyl-acyl-carrier-protein onto the lipoyl domains of lipoate-dependent enzymes. Lipoyl-ACP can also act as a substrate although octanoyl-ACP is likely to be the physiological substrate. The protein is Octanoyltransferase of Thermosynechococcus vestitus (strain NIES-2133 / IAM M-273 / BP-1).